A 1169-amino-acid chain; its full sequence is Flocculation protein FLO10 (1169 aa).

A signal peptide spans 1-24 (MPVAARYIFLTGLFLLSVANVALG). A PA14 domain is found at 111-271 (PVKRGVKLCS…GTEVNDDFEG (161 aa)). N-linked (GlcNAc...) asparagine glycosylation is found at Asn-122, Asn-157, and Asn-279. Tandem repeats lie at residues 303–326 (SSWS…VTPY), 330–356 (SSWS…YVTS), 357–383 (SSSS…YVSS), 384–419 (STAA…YVTS), 420–446 (SSWS…YVSS), 447–482 (STAA…YVTS), 483–509 (SSSS…YVSS), 510–545 (STAA…YVTS), 546–572 (SSWS…YVSS), and 573–608 (STAA…YATS). Residues 303-572 (SSWSSSEVCT…TSYVTPYVSS (270 aa)) form a 6 X 27 AA approximate repeats, Ser/Thr-rich region. A 4 X 36 AA approximate repeats, Ser/Thr-rich region spans residues 384–608 (STAAANYTSS…TSTSTPYATS (225 aa)). Asn-389 carries N-linked (GlcNAc...) asparagine glycosylation. The N-linked (GlcNAc...) asparagine glycan is linked to Asn-452. A glycan (N-linked (GlcNAc...) asparagine) is linked at Asn-515. 3 N-linked (GlcNAc...) asparagine glycosylation sites follow: Asn-578, Asn-656, and Asn-686. The segment covering 798–819 (TKVSSSESSESHRTSPTTSSES) has biased composition (low complexity). 3 disordered regions span residues 798 to 837 (TKVS…SSFS), 856 to 920 (TPSS…SRDR), and 1070 to 1107 (RNNN…EAVS). A compositionally biased stretch (polar residues) spans 856-884 (TPSSPISTVAPRSTGLNSQTESTNSSKET). N-linked (GlcNAc...) asparagine glycosylation occurs at Asn-879. Positions 886-902 (SSENSASVMPSSSATSP) are enriched in low complexity. The segment covering 906–916 (KVTSDETSSGF) has biased composition (polar residues). Residues 1077–1107 (TSGTTSIETHTTTTSNASENSDNVSASEAVS) show a composition bias toward low complexity. N-linked (GlcNAc...) asparagine glycans are attached at residues Asn-1092 and Asn-1099. Residue Gly-1146 is the site of GPI-anchor amidated glycine attachment. A propeptide spans 1147 to 1169 (IANHLLTNSGISIFIASLLLAIV) (removed in mature form).

Belongs to the flocculin family. Extensively O-glycosylated. Post-translationally, the GPI-anchor is attached to the protein in the endoplasmic reticulum and serves to target the protein to the cell surface. There, the glucosamine-inositol phospholipid moiety is cleaved off and the GPI-modified mannoprotein is covalently attached via its lipidless GPI glycan remnant to the 1,6-beta-glucan of the outer cell wall layer.

It is found in the secreted. The protein resides in the cell wall. It localises to the membrane. In terms of biological role, cell wall protein that participates directly in adhesive cell-cell interactions during yeast flocculation, a reversible, asexual and Ca(2+)-dependent process in which cells adhere to form aggregates (flocs) consisting of thousands of cells. The lectin-like protein sticks out of the cell wall of flocculent cells and selectively binds mannose residues in the cell walls of adjacent cells. Activity is inhibited by mannose, glucose, maltose and sucrose. Also involved in cell-substrate adhesion, haploid invasive growth and diploid pseudohyphae formation. In Saccharomyces cerevisiae (strain ATCC 204508 / S288c) (Baker's yeast), this protein is Flocculation protein FLO10 (FLO10).